A 439-amino-acid chain; its full sequence is Keratin, type I cytoskeletal 40 (439 aa).

The interval 1 to 89 (MASDGSPSCC…CEEGSFNSNE (89 aa)) is head. One can recognise an IF rod domain in the interval 89 to 400 (EKETMQFLND…GLLEKEDSRL (312 aa)). Residues 90–124 (KETMQFLNDRLASYLERVRSLEENNAELECRIREQ) are coil 1A. The segment at 125 to 135 (CEPNAPLVCPD) is linker 1. A coil 1B region spans residues 136–236 (YQRYFDTIEE…HEEEVNLLRE (101 aa)). The segment at 237-252 (QLGDRLSVELDTAPTV) is linker 12. The coil 2 stretch occupies residues 253 to 396 (DLNKVLDEMR…NTYRGLLEKE (144 aa)). Positions 397–439 (DSRLPCNPGSGAPMPNSTCEPCSNSMCEPCSAYVICTVENCCA) are tail.

This sequence belongs to the intermediate filament family. As to quaternary structure, heterotetramer of two type I and two type II keratins.

Its function is as follows. May play a role in late hair differentiation. This chain is Keratin, type I cytoskeletal 40 (Krt40), found in Mus musculus (Mouse).